A 550-amino-acid polypeptide reads, in one-letter code: Chaperonin GroEL (550 aa).

ATP is bound by residues 30–33 (TLGP), lysine 51, 87–91 (DGTTT), glycine 415, 479–481 (NAA), and aspartate 495. A disordered region spans residues 525-550 (PKDEKSSSELNSAPGNGMGGGMGGMM). A compositionally biased stretch (gly residues) spans 540-550 (NGMGGGMGGMM).

The protein belongs to the chaperonin (HSP60) family. Forms a cylinder of 14 subunits composed of two heptameric rings stacked back-to-back. Interacts with the co-chaperonin GroES.

Its subcellular location is the cytoplasm. It catalyses the reaction ATP + H2O + a folded polypeptide = ADP + phosphate + an unfolded polypeptide.. Functionally, together with its co-chaperonin GroES, plays an essential role in assisting protein folding. The GroEL-GroES system forms a nano-cage that allows encapsulation of the non-native substrate proteins and provides a physical environment optimized to promote and accelerate protein folding. This Buchnera aphidicola subsp. Cinara cedri (strain Cc) protein is Chaperonin GroEL.